Here is a 301-residue protein sequence, read N- to C-terminus: G-protein coupled receptor homolog U51 (301 aa).

Residues 1 to 15 (MEKETKSLAWPATAE) lie on the Extracellular side of the membrane. A helical membrane pass occupies residues 16–36 (FYGWVFIFSSIQLCTMVLLTV). At 37-48 (RFNSFKVGREYA) the chain is on the cytoplasmic side. A helical transmembrane segment spans residues 49–69 (VFTFAGMSFNCFLLPIKMGLL). The Extracellular segment spans residues 70 to 82 (SGHWSLPRDFCAI). Residues 83 to 103 (LLYIDDFSIYFSSWSLVFMAI) form a helical membrane-spanning segment. Over 104–122 (ERINHFCYSTPLLNENSKA) the chain is Cytoplasmic. The chain crosses the membrane as a helical span at residues 123–143 (LAKVCFPIVWIISGVQALQML). Over 144–168 (NNYKATALQNETPQCFLAFLRSGYD) the chain is Extracellular. The chain crosses the membrane as a helical span at residues 169–189 (MWLMLVYSVMIPVMLVFIYIY). The Cytoplasmic segment spans residues 190–199 (SKNFMLLKDE). Residues 200 to 220 (LSTVTTYLCIYLLLGTIAHLP) form a helical membrane-spanning segment. The Extracellular segment spans residues 221 to 238 (KAGLSEIESDKIFYGLRD). A helical membrane pass occupies residues 239–259 (IFMALPVLKVYYIPVMAYCMA). Residues 260 to 301 (CDDHTVPVRLCSIWLVNLCKKCFSCTRREKESDLEVGIKMLK) are Cytoplasmic-facing.

This sequence belongs to the G-protein coupled receptor 1 family.

Its subcellular location is the host cell membrane. In Homo sapiens (Human), this protein is G-protein coupled receptor homolog U51 (U51).